A 145-amino-acid chain; its full sequence is Large ribosomal subunit protein uL11 (145 aa).

It belongs to the universal ribosomal protein uL11 family. As to quaternary structure, part of the ribosomal stalk of the 50S ribosomal subunit. Interacts with L10 and the large rRNA to form the base of the stalk. L10 forms an elongated spine to which L12 dimers bind in a sequential fashion forming a multimeric L10(L12)X complex. One or more lysine residues are methylated.

Forms part of the ribosomal stalk which helps the ribosome interact with GTP-bound translation factors. The sequence is that of Large ribosomal subunit protein uL11 from Rickettsia akari (strain Hartford).